Reading from the N-terminus, the 130-residue chain is MAATVKKTGSKKSKRNVPNGVVHIQSTFNNTIVSITDTSGHVISWSSAGASGFKGARKGTPFAAQTAAEAAARRALDQGMRQIEVLVRGPGSGRETAIRALQVAGLEITLIRDVTPLPHNGCRRPKRRRV.

It belongs to the universal ribosomal protein uS11 family. Part of the 30S ribosomal subunit. Interacts with proteins S7 and S18. Binds to IF-3.

Functionally, located on the platform of the 30S subunit, it bridges several disparate RNA helices of the 16S rRNA. Forms part of the Shine-Dalgarno cleft in the 70S ribosome. This Prochlorococcus marinus (strain MIT 9312) protein is Small ribosomal subunit protein uS11.